The sequence spans 105 residues: Small ribosomal subunit protein uS10 (105 aa).

It belongs to the universal ribosomal protein uS10 family. As to quaternary structure, part of the 30S ribosomal subunit.

In terms of biological role, involved in the binding of tRNA to the ribosomes. The protein is Small ribosomal subunit protein uS10 of Lachnoclostridium phytofermentans (strain ATCC 700394 / DSM 18823 / ISDg) (Clostridium phytofermentans).